Reading from the N-terminus, the 351-residue chain is dTDP-glucose 4,6-dehydratase (351 aa).

NAD(+) contacts are provided by residues 12–13 (FI), 32–35 (DALT), 58–59 (DI), 80–84 (FAAES), and Thr-99. Substrate is bound at residue Ser-84. Residue Thr-133 coordinates substrate. Asp-134 serves as the catalytic Proton donor. Catalysis depends on proton acceptor residues Glu-135 and Tyr-158. Residue 158 to 162 (YSASK) coordinates NAD(+). Residue Asn-187 coordinates substrate. Position 188 (Asn-188) interacts with NAD(+). Residues 197 to 198 (KL), 213 to 215 (PVY), Arg-222, Asn-257, and 289 to 293 (DRPGH) contribute to the substrate site.

It belongs to the NAD(P)-dependent epimerase/dehydratase family. dTDP-glucose dehydratase subfamily. As to quaternary structure, homodimer. It depends on NAD(+) as a cofactor.

The catalysed reaction is dTDP-alpha-D-glucose = dTDP-4-dehydro-6-deoxy-alpha-D-glucose + H2O. It functions in the pathway carbohydrate biosynthesis; dTDP-L-rhamnose biosynthesis. Its pathway is bacterial outer membrane biogenesis; LPS O-antigen biosynthesis. Its function is as follows. Catalyzes the dehydration of dTDP-D-glucose to form dTDP-6-deoxy-D-xylo-4-hexulose via a three-step process involving oxidation, dehydration and reduction. The chain is dTDP-glucose 4,6-dehydratase (rfbB) from Xanthomonas campestris pv. campestris (strain ATCC 33913 / DSM 3586 / NCPPB 528 / LMG 568 / P 25).